The chain runs to 208 residues: GATA transcription factor 20 (208 aa).

Residues 94–119 (CASCDTTSTPLWRNGPKGPKSLCNAC) form a GATA-type zinc finger.

It belongs to the type IV zinc-finger family. Class B subfamily.

It is found in the nucleus. Transcriptional regulator that specifically binds 5'-GATA-3' or 5'-GAT-3' motifs within gene promoters. The polypeptide is GATA transcription factor 20 (Arabidopsis thaliana (Mouse-ear cress)).